The chain runs to 168 residues: Disulfide bond formation protein B (168 aa).

Residues 1–6 (MTSRWI) are Cytoplasmic-facing. The chain crosses the membrane as a helical span at residues 7–23 (FGLVFLVCAGLLAVAFY). Over 24–41 (MEHVMGLEPCPLCWLQRF) the chain is Periplasmic. Cys-33 and Cys-36 are joined by a disulfide. Residues 42–58 (GFMGAGLVSLLAFLHGP) form a helical membrane-spanning segment. The Cytoplasmic segment spans residues 59–65 (RGFGNRV). Residues 66–82 (YGLLLIVAAGAGLAVAG) traverse the membrane as a helical segment. The Periplasmic portion of the chain corresponds to 83–139 (RQLWLQSLPADQVPACGPSVDYMLEVLPWFEVLQTALKGTGDCAEVVWRFLGLSIPG). A disulfide bridge links Cys-98 with Cys-125. A helical transmembrane segment spans residues 140–158 (WTAVFFSLLIVLGLFVMLR). Over 159-168 (RYSPRDWLQS) the chain is Cytoplasmic.

The protein belongs to the DsbB family.

It is found in the cell inner membrane. Functionally, required for disulfide bond formation in some periplasmic proteins. Acts by oxidizing the DsbA protein. This chain is Disulfide bond formation protein B, found in Marinobacter nauticus (strain ATCC 700491 / DSM 11845 / VT8) (Marinobacter aquaeolei).